The chain runs to 96 residues: Evasin P1074 (96 aa).

The signal sequence occupies residues 1 to 28; sequence MAFNMITFLQMAVFVVILFNINLHSASA. 3 disulfides stabilise this stretch: cysteine 48/cysteine 67, cysteine 52/cysteine 69, and cysteine 63/cysteine 80. Asparagine 74 carries N-linked (GlcNAc...) asparagine glycosylation.

The protein resides in the secreted. Functionally, salivary chemokine-binding protein which binds to host chemokines CXCL1 and CXCL8. This chain is Evasin P1074, found in Ixodes ricinus (Common tick).